A 119-amino-acid chain; its full sequence is MRPDYRKAMLESEIMKLITEALREAKDPKISGQIITISRVELSNDKRFADVYVSAMGDKDERVKTVEYLDKIKGYFRTYLANNLDLYTAPQIRFKEDPGIEASVRIQELLNKIKEEETQ.

The protein belongs to the RbfA family. As to quaternary structure, monomer. Binds 30S ribosomal subunits, but not 50S ribosomal subunits or 70S ribosomes.

The protein resides in the cytoplasm. Its function is as follows. One of several proteins that assist in the late maturation steps of the functional core of the 30S ribosomal subunit. Associates with free 30S ribosomal subunits (but not with 30S subunits that are part of 70S ribosomes or polysomes). Required for efficient processing of 16S rRNA. May interact with the 5'-terminal helix region of 16S rRNA. In Pseudothermotoga lettingae (strain ATCC BAA-301 / DSM 14385 / NBRC 107922 / TMO) (Thermotoga lettingae), this protein is Ribosome-binding factor A.